We begin with the raw amino-acid sequence, 81 residues long: Beta-defensin 34 (81 aa).

The N-terminal stretch at 1–20 (MKTFLFLFAVLFFWSQPRMH) is a signal peptide. Intrachain disulfides connect C28–C55, C35–C49, and C39–C56. Polar residues predominate over residues 62-72 (CGRSKGNQSDE). The disordered stretch occupies residues 62-81 (CGRSKGNQSDEGSGHMGTRG).

The protein belongs to the beta-defensin family. In terms of tissue distribution, only expressed in epididymis (caput, corpus and cauda).

The protein localises to the secreted. Its function is as follows. Has antibacterial activity. The protein is Beta-defensin 34 (Defb34) of Mus musculus (Mouse).